A 328-amino-acid chain; its full sequence is Probable cell division protein WhiA (328 aa).

Residues 275–308 (SLEELGQLHDPVLTKDAIAGRIRRLLAMADKRAE) constitute a DNA-binding region (H-T-H motif).

The protein belongs to the WhiA family.

In terms of biological role, involved in cell division and chromosome segregation. This Nocardioides sp. (strain ATCC BAA-499 / JS614) protein is Probable cell division protein WhiA.